The chain runs to 396 residues: Tryptophan synthase beta chain (396 aa).

Position 88 is an N6-(pyridoxal phosphate)lysine (Lys-88).

The protein belongs to the TrpB family. Tetramer of two alpha and two beta chains. Requires pyridoxal 5'-phosphate as cofactor.

It carries out the reaction (1S,2R)-1-C-(indol-3-yl)glycerol 3-phosphate + L-serine = D-glyceraldehyde 3-phosphate + L-tryptophan + H2O. The protein operates within amino-acid biosynthesis; L-tryptophan biosynthesis; L-tryptophan from chorismate: step 5/5. Its function is as follows. The beta subunit is responsible for the synthesis of L-tryptophan from indole and L-serine. The sequence is that of Tryptophan synthase beta chain from Actinobacillus pleuropneumoniae serotype 5b (strain L20).